The chain runs to 455 residues: L-serine dehydratase (455 aa).

It belongs to the iron-sulfur dependent L-serine dehydratase family. The cofactor is [4Fe-4S] cluster.

The catalysed reaction is L-serine = pyruvate + NH4(+). It participates in carbohydrate biosynthesis; gluconeogenesis. In Helicobacter pylori (strain ATCC 700392 / 26695) (Campylobacter pylori), this protein is L-serine dehydratase (sdaA).